The chain runs to 354 residues: Methylthioribose-1-phosphate isomerase (354 aa).

The active-site Proton donor is the Asp246.

This sequence belongs to the eIF-2B alpha/beta/delta subunits family. MtnA subfamily.

It is found in the cytoplasm. Its subcellular location is the nucleus. It carries out the reaction 5-(methylsulfanyl)-alpha-D-ribose 1-phosphate = 5-(methylsulfanyl)-D-ribulose 1-phosphate. It participates in amino-acid biosynthesis; L-methionine biosynthesis via salvage pathway; L-methionine from S-methyl-5-thio-alpha-D-ribose 1-phosphate: step 1/6. In terms of biological role, catalyzes the interconversion of methylthioribose-1-phosphate (MTR-1-P) into methylthioribulose-1-phosphate (MTRu-1-P). The polypeptide is Methylthioribose-1-phosphate isomerase (mri1) (Xenopus laevis (African clawed frog)).